The sequence spans 150 residues: Large ribosomal subunit protein bL9 (150 aa).

It belongs to the bacterial ribosomal protein bL9 family.

Binds to the 23S rRNA. In Vesicomyosocius okutanii subsp. Calyptogena okutanii (strain HA), this protein is Large ribosomal subunit protein bL9.